Reading from the N-terminus, the 485-residue chain is Glutamate--tRNA ligase (485 aa).

R6 is an L-glutamate binding site. The short motif at 9-19 (PSPTGNLHIGT) is the 'HIGH' region element. L-glutamate is bound by residues Y192 and 210–214 (RGEDH). Positions 248–252 (KLSKR) match the 'KMSKS' region motif. Position 251 (K251) interacts with ATP.

The protein belongs to the class-I aminoacyl-tRNA synthetase family. Glutamate--tRNA ligase type 1 subfamily. As to quaternary structure, monomer. The cofactor is Does not require zinc..

The protein localises to the cytoplasm. The catalysed reaction is tRNA(Glu) + L-glutamate + ATP = L-glutamyl-tRNA(Glu) + AMP + diphosphate. Non-discriminating glutamyl-tRNA synthetase. Catalyzes the attachment of glutamate to tRNA(Glu) in a two-step reaction: glutamate is first activated by ATP to form Glu-AMP and then transferred to the acceptor end of tRNA(Glu). Acylates both tRNA(Glu) and tRNA(Gln) with glutamate, but has 13-fold higher efficiency with tRNA(Glu). The sequence is that of Glutamate--tRNA ligase (gltX) from Thermosynechococcus vestitus (strain NIES-2133 / IAM M-273 / BP-1).